The following is a 772-amino-acid chain: MGWFTGIACLFWGVLLTARANYANGKNNVPRLKLSYKEMLESNNVITFNGLANSSSYHTFLLDEERSRLYVGAKDHIFSFNLVNIKDFQKIVWPVSYTRRDECKWAGKDILKECANFIKVLEAYNQTHLYACGTGAFHPICTYIEVGHHPEDNIFKLQDSHFENGRGKSPYDPKLLTASLLIDGELYSGTAADFMGRDFAIFRTLGHHHPIRTEQHDSRWLNDPRFISAHLIPESDNPEDDKVYFFFRENAIDGEHSGKATHARIGQICKNDFGGHRSLVNKWTTFLKARLICSVPGPNGIDTHFDELQDVFLMNSKDPKNPIVYGVFTTSSNIFKGSAVCMYSMSDVRRVFLGPYAHRDGPNYQWVPYQGRVPYPRPGTCPSKTFGGFDSTKDLPDDVITFARSHPAMYNPVFPINNRPIMIKTDVNYQFTQIVVDRVDAEDGQYDVMFIGTDVGTVLKVVSVPKETWHDLEEILLEEMTVFREPTTISAMELSTKQQQLYIGSTAGVAQLPLHRCDIYGKACAECCLARDPYCAWDGSSCSRYFPTAKRRTRRQDIRNGDPLTHCSDLQHHDNHHGPSLEERIIYGVENSSTFLECSPKSQRALVYWQFQRRNEDRKEEIRMGDHIIRTEQGLLLRSLQKKDSGNYLCHAVEHGFMQTLLKVTLEVIDTEHLEELLHKDDDGDGSKIKEMSSSMTPSQKVWYRDFMQLINHPNLNTMDEFCEQVWKRDRKQRRQRPGHSQGSSNKWKHMQESKKGRNRRTHEFERAPRSV.

An N-terminal signal peptide occupies residues M1–A20. A Sema domain is found at R31–L514. N-linked (GlcNAc...) asparagine glycosylation is present at N53. A disulfide bridge links C103 with C114. An N-linked (GlcNAc...) asparagine glycan is attached at N125. 4 disulfides stabilise this stretch: C132/C141, C269/C381, C293/C341, and C517/C535. Residues P579–T665 form the Ig-like C2-type domain. N591 carries N-linked (GlcNAc...) asparagine glycosylation. C650 and C723 are disulfide-bonded. A compositionally biased stretch (basic residues) spans R729–P738. Residues R729–V772 are disordered. Residues H750–V772 are compositionally biased toward basic and acidic residues.

The protein belongs to the semaphorin family. In terms of assembly, interacts with PXND1.

The protein localises to the secreted. Plays a role in growth cones guidance. May function to pattern sensory projections by selectively repelling axons that normally terminate dorsally. Involved in the development of the olfactory system and in neuronal control of puberty. This chain is Semaphorin-3A (Sema3a), found in Mus musculus (Mouse).